We begin with the raw amino-acid sequence, 220 residues long: MRTLTCVPDESTAKVHTCRAPFMLHRVMIPPDPIQRFAELFERAKQAIAVDPNAMVVATVGDDGRPSARVVLLKDFDARGFVFYTNHESRKGREARAHPYAALCFYWQPLNEQVRVEGRVERVTDAEADAYFQSRARGSQVGAWASLQSQPLATREELEARVAEVEQKYAGQPVPRPPHWSGFRVVPDRIEFWHAQESRLHDRHVYLREDGGWRTQMLYP.

FMN contacts are provided by residues 69–74 (RVVLLK), 84–85 (YT), R90, K91, and Q113. K74 lines the substrate pocket. Residues Y131, R135, and S139 each contribute to the substrate site. FMN is bound by residues 148–149 (QS) and W193. Residue 199–201 (RLH) coordinates substrate. R203 provides a ligand contact to FMN.

Belongs to the pyridoxamine 5'-phosphate oxidase family. In terms of assembly, homodimer. The cofactor is FMN.

The enzyme catalyses pyridoxamine 5'-phosphate + O2 + H2O = pyridoxal 5'-phosphate + H2O2 + NH4(+). It catalyses the reaction pyridoxine 5'-phosphate + O2 = pyridoxal 5'-phosphate + H2O2. It functions in the pathway cofactor metabolism; pyridoxal 5'-phosphate salvage; pyridoxal 5'-phosphate from pyridoxamine 5'-phosphate: step 1/1. The protein operates within cofactor metabolism; pyridoxal 5'-phosphate salvage; pyridoxal 5'-phosphate from pyridoxine 5'-phosphate: step 1/1. In terms of biological role, catalyzes the oxidation of either pyridoxine 5'-phosphate (PNP) or pyridoxamine 5'-phosphate (PMP) into pyridoxal 5'-phosphate (PLP). The protein is Pyridoxine/pyridoxamine 5'-phosphate oxidase of Myxococcus xanthus.